The chain runs to 218 residues: Protein-methionine-sulfoxide reductase heme-binding subunit MsrQ (218 aa).

The next 5 membrane-spanning stretches (helical) occupy residues 14-34, 60-80, 86-106, 121-141, and 155-175; these read LVHAAALAPIALLGWQFWQVW, FLLITLAITPLRQLTGQAVVI, LGLYAFFYASVHLAAYLTLDL, PYITVGFAAWLLLMPLAITST, and LHTLIYPIGLLAVLHFWWLVK.

It belongs to the MsrQ family. In terms of assembly, heterodimer of a catalytic subunit (MsrP) and a heme-binding subunit (MsrQ). The cofactor is FMN. Requires heme b as cofactor.

It localises to the cell inner membrane. Part of the MsrPQ system that repairs oxidized periplasmic proteins containing methionine sulfoxide residues (Met-O), using respiratory chain electrons. Thus protects these proteins from oxidative-stress damage caused by reactive species of oxygen and chlorine generated by the host defense mechanisms. MsrPQ is essential for the maintenance of envelope integrity under bleach stress, rescuing a wide series of structurally unrelated periplasmic proteins from methionine oxidation. MsrQ provides electrons for reduction to the reductase catalytic subunit MsrP, using the quinone pool of the respiratory chain. This chain is Protein-methionine-sulfoxide reductase heme-binding subunit MsrQ, found in Xanthomonas euvesicatoria pv. vesicatoria (strain 85-10) (Xanthomonas campestris pv. vesicatoria).